A 181-amino-acid chain; its full sequence is Ribulose bisphosphate carboxylase small subunit, chloroplastic (181 aa).

The N-terminal 54 residues, 1-54 (MASSMLSSAAVVTSQLQATMVAPFTGLKSSAAFPVTRKTNTDITSIASNGGRVS), are a transit peptide targeting the chloroplast.

This sequence belongs to the RuBisCO small chain family. Heterohexadecamer of 8 large and 8 small subunits.

It is found in the plastid. Its subcellular location is the chloroplast. Functionally, ruBisCO catalyzes two reactions: the carboxylation of D-ribulose 1,5-bisphosphate, the primary event in carbon dioxide fixation, as well as the oxidative fragmentation of the pentose substrate. Both reactions occur simultaneously and in competition at the same active site. Although the small subunit is not catalytic it is essential for maximal activity. This Raphanus sativus (Radish) protein is Ribulose bisphosphate carboxylase small subunit, chloroplastic.